We begin with the raw amino-acid sequence, 205 residues long: Rho-related GTP-binding protein RhoQ (205 aa).

Residue 16–23 (GDGAVGKT) participates in GTP binding. The short motif at 38 to 46 (YVPTVFDHY) is the Effector region element. Residues 63-67 (DTAGQ) and 121-124 (TQID) contribute to the GTP site. Cysteine 202 bears the Cysteine methyl ester mark. A lipid anchor (S-farnesyl cysteine) is attached at cysteine 202. Residues 203 to 205 (LIT) constitute a propeptide, removed in mature form.

It belongs to the small GTPase superfamily. Rho family. As to quaternary structure, interacts with EXO70, CDC42EP1, CDC42EP2 and CDC42EP3 in a GTP-dependent manner. Interacts with CDC42EP4, PARD6A, PARD6G (and probably PARD6B) in a GTP-dependent manner. Part of a quaternary complex containing PARD3, some PARD6 protein (PARD6A, PARD6B or PARD6G) and some atypical PKC protein (PRKCI or PRKCZ). Interacts with GOPC. Interacts with ARHGAP33/TCGAP. May be post-translationally modified by both palmitoylation and polyisoprenylation.

It is found in the cytoplasm. The protein resides in the cell membrane. Regulated by guanine nucleotide exchange factors (GEFs) which promote the exchange of bound GDP for free GTP, GTPase activating proteins (GAPs) which increase the GTP hydrolysis activity, and GDP dissociation inhibitors which inhibit the dissociation of the nucleotide from the GTPase. Functionally, plasma membrane-associated small GTPase which cycles between an active GTP-bound and an inactive GDP-bound state. In active state binds to a variety of effector proteins to regulate cellular responses. Involved in epithelial cell polarization processes. May play a role in CFTR trafficking to the plasma membrane. Causes the formation of thin, actin-rich surface projections called filopodia. The chain is Rho-related GTP-binding protein RhoQ (Rhoq) from Mus musculus (Mouse).